Reading from the N-terminus, the 116-residue chain is Staphylococcal complement inhibitor (116 aa).

A signal peptide spans 1–31; sequence MKIRKSILAGTLAIVLASPLVTNLDKNEAQA. The segment at 62–79 is essential for activity; sequence LATGSLNTYYKRTIKISG.

The protein belongs to the SCIN family.

It localises to the secreted. Functionally, involved in countering the first line of host defense mechanisms. Efficiently inhibits opsonization, phagocytosis and killing of S.aureus by human neutrophils. Acts by binding and stabilizing human C3 convertases (C4b2a and C3bBb), leading to their inactivation. The convertases are no longer able to cleave complement C3, therefore preventing further C3b deposition on the bacterial surface and phagocytosis of the bacterium. Also prevents C5a-induced neutrophil responses. This chain is Staphylococcal complement inhibitor (scn), found in Staphylococcus aureus (strain N315).